A 194-amino-acid polypeptide reads, in one-letter code: Large ribosomal subunit protein uL10 (194 aa).

Low complexity predominate over residues 172 to 187 (EGGAAEAPAEAATEAP). The segment at 172–194 (EGGAAEAPAEAATEAPAEAEAES) is disordered.

This sequence belongs to the universal ribosomal protein uL10 family. Part of the ribosomal stalk of the 50S ribosomal subunit. The N-terminus interacts with L11 and the large rRNA to form the base of the stalk. The C-terminus forms an elongated spine to which L12 dimers bind in a sequential fashion forming a multimeric L10(L12)X complex.

In terms of biological role, forms part of the ribosomal stalk, playing a central role in the interaction of the ribosome with GTP-bound translation factors. The chain is Large ribosomal subunit protein uL10 from Rhodococcus erythropolis (strain PR4 / NBRC 100887).